Consider the following 947-residue polypeptide: DNA polymerase (947 aa).

This sequence belongs to the DNA polymerase type-B family.

The enzyme catalyses DNA(n) + a 2'-deoxyribonucleoside 5'-triphosphate = DNA(n+1) + diphosphate. In Red sea bream iridovirus (RSIV), this protein is DNA polymerase.